We begin with the raw amino-acid sequence, 429 residues long: Mannose-6-phosphate isomerase (429 aa).

Zn(2+) is bound by residues Q110, H112, E137, and H282. R301 is a catalytic residue.

The protein belongs to the mannose-6-phosphate isomerase type 1 family. Zn(2+) is required as a cofactor.

Its subcellular location is the cytoplasm. The catalysed reaction is D-mannose 6-phosphate = D-fructose 6-phosphate. Its pathway is nucleotide-sugar biosynthesis; GDP-alpha-D-mannose biosynthesis; alpha-D-mannose 1-phosphate from D-fructose 6-phosphate: step 1/2. In terms of biological role, involved in the synthesis of the GDP-mannose and dolichol-phosphate-mannose required for a number of critical mannosyl transfer reactions. The sequence is that of Mannose-6-phosphate isomerase (PMI1) from Candida glabrata (strain ATCC 2001 / BCRC 20586 / JCM 3761 / NBRC 0622 / NRRL Y-65 / CBS 138) (Yeast).